Here is a 770-residue protein sequence, read N- to C-terminus: Low-density lipoprotein receptor-related protein 3 (770 aa).

The first 36 residues, 1-36, serve as a signal peptide directing secretion; it reads MEKRAAAGLEGAPGARAQLAVVCLVNIFLTGRLSSA. At 37-496 the chain is on the extracellular side; sequence VPALAACSGK…HGCLAAVPRK (460 aa). Intrachain disulfides connect Cys-43/Cys-72, Cys-99/Cys-120, Cys-166/Cys-178, Cys-173/Cys-191, Cys-185/Cys-200, Cys-212/Cys-227, Cys-219/Cys-240, Cys-234/Cys-249, and Cys-254/Cys-282. The CUB 1 domain maps to 43 to 159; that stretch reads CSGKLEQHTE…QGFRLSYIRG (117 aa). The N-linked (GlcNAc...) asparagine glycan is linked to Asn-71. LDL-receptor class A domains follow at residues 165-201 and 211-250; these read SCQADEFRCDNGKCLPGPWQCNTVDECGDGSDEGNCS and LCPGGTFPCSGARSTRCLPVERRCDGLQDCGDGSDEAGCP. Asn-199 carries an N-linked (GlcNAc...) asparagine glycan. Residues 254 to 365 enclose the CUB 2 domain; the sequence is CGRRLGSFYG…HGFNATYQVK (112 aa). Asn-359 is a glycosylation site (N-linked (GlcNAc...) asparagine). 2 consecutive LDL-receptor class A domains span residues 415-453 and 454-490; these read ACPPDQYPCEGGSGLCYTPADRCNNQKSCPDGADEKNCF and SCQPGTFHCGTNLCIFETWRCDGQEDCQDGSDEHGCL. Cystine bridges form between Cys-416–Cys-430, Cys-423–Cys-443, Cys-437–Cys-452, Cys-455–Cys-467, Cys-462–Cys-480, and Cys-474–Cys-489. The helical transmembrane segment at 497-517 threads the bilayer; sequence VITAALIGSLVCGLLLVIALG. Over 518–770 the chain is Cytoplasmic; sequence CAFKLYSLRT…ASDDEALLVC (253 aa). Residues 635–770 form a disordered region; sequence LGDGFLQPAP…ASDDEALLVC (136 aa). The span at 689-707 shows a compositional bias: basic and acidic residues; sequence RDPECRPVDKDRKVCREPL. Residues 729–738 show a composition bias toward polar residues; it reads QVSTASSTLG. Acidic residues predominate over residues 761–770; sequence ASDDEALLVC.

The protein belongs to the LDLR family. As to quaternary structure, binds GGA1 and GGA2. As to expression, widely expressed. Highly expressed in skeletal muscle and ovary. Expressed at intermediate level in heart, brain, liver, pancreas, prostate and small intestine. Weakly expressed in testis, colon and leukocyte.

It localises to the membrane. Its subcellular location is the coated pit. Probable receptor, which may be involved in the internalization of lipophilic molecules and/or signal transduction. Its precise role is however unclear, since it does not bind to very low density lipoprotein (VLDL) or to LRPAP1 in vitro. This Homo sapiens (Human) protein is Low-density lipoprotein receptor-related protein 3 (LRP3).